The sequence spans 223 residues: Deoxyribose-phosphate aldolase (223 aa).

Asp91 (proton donor/acceptor) is an active-site residue. Lys154 serves as the catalytic Schiff-base intermediate with acetaldehyde. The Proton donor/acceptor role is filled by Lys183.

This sequence belongs to the DeoC/FbaB aldolase family. DeoC type 1 subfamily.

Its subcellular location is the cytoplasm. The enzyme catalyses 2-deoxy-D-ribose 5-phosphate = D-glyceraldehyde 3-phosphate + acetaldehyde. It functions in the pathway carbohydrate degradation; 2-deoxy-D-ribose 1-phosphate degradation; D-glyceraldehyde 3-phosphate and acetaldehyde from 2-deoxy-alpha-D-ribose 1-phosphate: step 2/2. Its function is as follows. Catalyzes a reversible aldol reaction between acetaldehyde and D-glyceraldehyde 3-phosphate to generate 2-deoxy-D-ribose 5-phosphate. The polypeptide is Deoxyribose-phosphate aldolase (Geobacillus sp. (strain WCH70)).